The primary structure comprises 630 residues: Elongation factor 4 (630 aa).

Residues 1–22 (MTVARNRAGAGPGKGSPISSFA) are disordered. A tr-type G domain is found at 30–211 (ARIRNFCIIA…EVVRQVPAPV (182 aa)). Residues 42 to 47 (DHGKST) and 158 to 161 (NKID) contribute to the GTP site.

Belongs to the TRAFAC class translation factor GTPase superfamily. Classic translation factor GTPase family. LepA subfamily.

It localises to the cell membrane. The enzyme catalyses GTP + H2O = GDP + phosphate + H(+). In terms of biological role, required for accurate and efficient protein synthesis under certain stress conditions. May act as a fidelity factor of the translation reaction, by catalyzing a one-codon backward translocation of tRNAs on improperly translocated ribosomes. Back-translocation proceeds from a post-translocation (POST) complex to a pre-translocation (PRE) complex, thus giving elongation factor G a second chance to translocate the tRNAs correctly. Binds to ribosomes in a GTP-dependent manner. This Rhodococcus opacus (strain B4) protein is Elongation factor 4.